The chain runs to 148 residues: Large ribosomal subunit protein bL9 (148 aa).

This sequence belongs to the bacterial ribosomal protein bL9 family.

Functionally, binds to the 23S rRNA. The polypeptide is Large ribosomal subunit protein bL9 (Thermobifida fusca (strain YX)).